The following is a 378-amino-acid chain: Deoxyguanosinetriphosphate triphosphohydrolase-like protein (378 aa).

The HD domain occupies 62–198 (RLTHTIEVAQ…AAVADDVAYN (137 aa)).

This sequence belongs to the dGTPase family. Type 2 subfamily.

The chain is Deoxyguanosinetriphosphate triphosphohydrolase-like protein from Paracoccus denitrificans (strain Pd 1222).